The primary structure comprises 195 residues: Probable GTP-binding protein EngB (195 aa).

Residues 22–194 (LKGEVAFVGR…LDLISTLLKE (173 aa)) form the EngB-type G domain. GTP is bound by residues 30–37 (GRSNVGKS), 56–60 (GKTRS), 74–77 (DLPG), 141–144 (TKMD), and 173–175 (TSS). Residues Ser-37 and Thr-58 each coordinate Mg(2+).

Belongs to the TRAFAC class TrmE-Era-EngA-EngB-Septin-like GTPase superfamily. EngB GTPase family. The cofactor is Mg(2+).

Its function is as follows. Necessary for normal cell division and for the maintenance of normal septation. In Thermotoga petrophila (strain ATCC BAA-488 / DSM 13995 / JCM 10881 / RKU-1), this protein is Probable GTP-binding protein EngB.